A 585-amino-acid polypeptide reads, in one-letter code: Amyloid protein-binding protein 2 (585 aa).

8 TPR repeats span residues 50–83 (QGRL…HHCF), 120–153 (IQVG…CTLH), 206–239 (AALY…ITSG), 288–321 (SDTL…RQSV), 333–367 (HEDL…ITHI), 429–462 (AKHY…KEQL), 471–505 (ALSV…GKKL), and 514–547 (EYDY…NRLR).

In terms of assembly, component of a CRL2 E3 ubiquitin-protein ligase complex, also named ECS (Elongin BC-CUL2/5-SOCS-box protein) complex, composed of CUL2, Elongin BC (ELOB and ELOC), RBX1 and substrate-specific adapter APPBP2. Interacts with APP; APP interaction inhibits the E3 ubiquitin-protein ligase activity of the CRL2(APPBP2) complex. In terms of processing, rapidly degraded by the proteasome upon overexpression of a C-terminal fragment of APP.

It localises to the nucleus. It is found in the cytoplasm. The protein resides in the cytoskeleton. The protein localises to the membrane. Its pathway is protein modification; protein ubiquitination. E3 ubiquitin-protein ligase activity of the CRL2(APPBP2) complex is inhibited by APP. In terms of biological role, substrate-recognition component of a Cul2-RING (CRL2) E3 ubiquitin-protein ligase complex of the DesCEND (destruction via C-end degrons) pathway, which recognizes a C-degron located at the extreme C terminus of target proteins, leading to their ubiquitination and degradation. The C-degron recognized by the DesCEND pathway is usually a motif of less than ten residues and can be present in full-length proteins, truncated proteins or proteolytically cleaved forms. The CRL2(APPBP2) complex specifically recognizes proteins with a -Arg-Xaa-Xaa-Gly degron at the C-terminus, leading to their ubiquitination and degradation. The CRL2(APPBP2) complex mediates ubiquitination and degradation of truncated SELENOV selenoproteins produced by failed UGA/Sec decoding, which end with a -Arg-Xaa-Xaa-Gly degron. May play a role in intracellular protein transport: may be involved in the translocation of APP along microtubules toward the cell surface. The sequence is that of Amyloid protein-binding protein 2 from Rattus norvegicus (Rat).